We begin with the raw amino-acid sequence, 169 residues long: Ribosome maturation factor RimM (169 aa).

One can recognise a PRC barrel domain in the interval 97 to 169 (EDEVYFKDLI…KIVVDWEYDY (73 aa)).

It belongs to the RimM family. Binds ribosomal protein uS19.

It is found in the cytoplasm. Functionally, an accessory protein needed during the final step in the assembly of 30S ribosomal subunit, possibly for assembly of the head region. Essential for efficient processing of 16S rRNA. May be needed both before and after RbfA during the maturation of 16S rRNA. It has affinity for free ribosomal 30S subunits but not for 70S ribosomes. The chain is Ribosome maturation factor RimM from Francisella tularensis subsp. tularensis (strain WY96-3418).